Here is a 263-residue protein sequence, read N- to C-terminus: Acyl-[acyl-carrier-protein]--UDP-N-acetylglucosamine O-acyltransferase (263 aa).

This sequence belongs to the transferase hexapeptide repeat family. LpxA subfamily. As to quaternary structure, homotrimer.

It is found in the cytoplasm. The catalysed reaction is a (3R)-hydroxyacyl-[ACP] + UDP-N-acetyl-alpha-D-glucosamine = a UDP-3-O-[(3R)-3-hydroxyacyl]-N-acetyl-alpha-D-glucosamine + holo-[ACP]. Its pathway is glycolipid biosynthesis; lipid IV(A) biosynthesis; lipid IV(A) from (3R)-3-hydroxytetradecanoyl-[acyl-carrier-protein] and UDP-N-acetyl-alpha-D-glucosamine: step 1/6. Its function is as follows. Involved in the biosynthesis of lipid A, a phosphorylated glycolipid that anchors the lipopolysaccharide to the outer membrane of the cell. The protein is Acyl-[acyl-carrier-protein]--UDP-N-acetylglucosamine O-acyltransferase of Campylobacter jejuni subsp. jejuni serotype O:23/36 (strain 81-176).